Consider the following 121-residue polypeptide: Large ribosomal subunit protein uL18 (121 aa).

This sequence belongs to the universal ribosomal protein uL18 family. In terms of assembly, part of the 50S ribosomal subunit; part of the 5S rRNA/L5/L18/L25 subcomplex. Contacts the 5S and 23S rRNAs.

Functionally, this is one of the proteins that bind and probably mediate the attachment of the 5S RNA into the large ribosomal subunit, where it forms part of the central protuberance. The protein is Large ribosomal subunit protein uL18 of Leptothrix cholodnii (strain ATCC 51168 / LMG 8142 / SP-6) (Leptothrix discophora (strain SP-6)).